The primary structure comprises 250 residues: Cell division protein ZapD (250 aa).

The protein belongs to the ZapD family. In terms of assembly, interacts with FtsZ.

The protein resides in the cytoplasm. Cell division factor that enhances FtsZ-ring assembly. Directly interacts with FtsZ and promotes bundling of FtsZ protofilaments, with a reduction in FtsZ GTPase activity. The sequence is that of Cell division protein ZapD from Photorhabdus laumondii subsp. laumondii (strain DSM 15139 / CIP 105565 / TT01) (Photorhabdus luminescens subsp. laumondii).